The primary structure comprises 297 residues: Glycerol-3-phosphate dehydrogenase [NAD(P)+] (297 aa).

NADPH contacts are provided by Trp11, Arg33, and Lys79. Sn-glycerol 3-phosphate is bound by residues Lys79, Gly107, and Ser109. Ala111 is an NADPH binding site. Residues Lys161, Asp214, Ser224, Arg225, and Asn226 each contribute to the sn-glycerol 3-phosphate site. Lys161 serves as the catalytic Proton acceptor. Arg225 serves as a coordination point for NADPH. NADPH is bound by residues Val249 and Glu251.

This sequence belongs to the NAD-dependent glycerol-3-phosphate dehydrogenase family.

Its subcellular location is the cytoplasm. The enzyme catalyses sn-glycerol 3-phosphate + NAD(+) = dihydroxyacetone phosphate + NADH + H(+). It catalyses the reaction sn-glycerol 3-phosphate + NADP(+) = dihydroxyacetone phosphate + NADPH + H(+). It functions in the pathway membrane lipid metabolism; glycerophospholipid metabolism. In terms of biological role, catalyzes the reduction of the glycolytic intermediate dihydroxyacetone phosphate (DHAP) to sn-glycerol 3-phosphate (G3P), the key precursor for phospholipid synthesis. This is Glycerol-3-phosphate dehydrogenase [NAD(P)+] from Campylobacter jejuni subsp. jejuni serotype O:2 (strain ATCC 700819 / NCTC 11168).